We begin with the raw amino-acid sequence, 277 residues long: Indole-3-glycerol phosphate synthase (277 aa).

Belongs to the TrpC family.

It catalyses the reaction 1-(2-carboxyphenylamino)-1-deoxy-D-ribulose 5-phosphate + H(+) = (1S,2R)-1-C-(indol-3-yl)glycerol 3-phosphate + CO2 + H2O. It functions in the pathway amino-acid biosynthesis; L-tryptophan biosynthesis; L-tryptophan from chorismate: step 4/5. The protein is Indole-3-glycerol phosphate synthase of Pseudomonas putida (strain W619).